Reading from the N-terminus, the 170-residue chain is Ribulose bisphosphate carboxylase small subunit, chloroplastic (170 aa).

Transit peptides (chloroplast) lie at residues 1 to 46 (MAPT…GRIR) and 1 to 47 (MAPT…RIRC).

This sequence belongs to the RuBisCO small chain family. As to quaternary structure, heterohexadecamer of 8 large and 8 small subunits.

It is found in the plastid. The protein resides in the chloroplast. In terms of biological role, ruBisCO catalyzes two reactions: the carboxylation of D-ribulose 1,5-bisphosphate, the primary event in carbon dioxide fixation, as well as the oxidative fragmentation of the pentose substrate. Both reactions occur simultaneously and in competition at the same active site. Although the small subunit is not catalytic it is essential for maximal activity. In Zea mays (Maize), this protein is Ribulose bisphosphate carboxylase small subunit, chloroplastic.